A 337-amino-acid chain; its full sequence is 2-oxoglutarate receptor 1 (337 aa).

Over 1 to 37 (MIETLDSPANDSDFLDYITALENCTDEQISFKMQYLP) the chain is Extracellular. The N-linked (GlcNAc...) asparagine glycan is linked to asparagine 23. Residues 38 to 58 (VIYSIIFLVGFPGNTVAISIY) traverse the membrane as a helical segment. The Cytoplasmic segment spans residues 59–69 (VFKMRPWKSST). Residues 70–90 (IIMLNLALTDLLYLTSLPFLI) form a helical membrane-spanning segment. Topologically, residues 91-116 (HYYASGENWIFGDFMCKFIRFGFHFN) are extracellular. Cysteine 106 and cysteine 183 are disulfide-bonded. A helical transmembrane segment spans residues 117 to 137 (LYSSILFLTCFSLFRYIVIIH). Residues 138 to 151 (PMSCFSIQKTRWAV) are Cytoplasmic-facing. Residues 152 to 172 (VACAGVWVISLVAVMPMTFLI) form a helical membrane-spanning segment. The Extracellular segment spans residues 173-200 (TSTTRTNRSACLDLTSSDDLTTIKWYNL). A helical transmembrane segment spans residues 201-221 (ILTATTFCLPLLIVTLCYTTI). Residues 222-242 (ISTLTHGPRTHSCFKQKARRL) are Cytoplasmic-facing. Residues 243–263 (TILLLLVFYVCFLPFHILRVI) traverse the membrane as a helical segment. The Extracellular segment spans residues 264–284 (RIESRLLSISCSIESHIHEAY). The chain crosses the membrane as a helical span at residues 285–305 (IVSRPLAALNTFGNLLLYVVV). The Cytoplasmic portion of the chain corresponds to 306 to 337 (SNNFQQAFCSAVRCKAIGDLEQAKKDSCSNNP).

This sequence belongs to the G-protein coupled receptor 1 family. Highly expressed in mast cells and is found predominantly in the tissues of the respiratory tract and kidneys.

Its subcellular location is the cell membrane. G protein-coupled receptor for dicarboxylates and amino dicarboxylates. Receptor for itaconate, a metabolite produced by myeloid lineages. In the respiratory epithelium, couples the binding of itaconate to the activation of GNA11 and downstream intracellular Ca(2+) release, leading to mucocilliary clearance of airborne pathogens. Receptor for leukotriene E4 (LTE4) produced by mast cells upon allergic inflammation. Binds with high affinity to LTE4 and elicits mucin release from pulmonary epithelium in response to airborne fungi allergens. Regulates mucin-producing goblet cell homeostasis. Receptor for alpha-ketoglutarate produced by proximal tubule renal cells upon metabolic alkalosis. In an intrarenal paracrine signaling pathway, binds alpha-ketoglutarate and drives transepithelial salt reabsorption and bicarbonate secretion by SLC26A4/pendrin-positive intercalated cells. In Rattus norvegicus (Rat), this protein is 2-oxoglutarate receptor 1 (Oxgr1).